The following is a 934-amino-acid chain: Serine/threonine-protein kinase PknD (934 aa).

A Protein kinase domain is found at 4–296; that stretch reads YELIRLIGKG…ELRQALQPYL (293 aa). ATP contacts are provided by residues 10–18 and Lys-33; that span reads IGKGGMGEV. Residue Asp-138 is the Proton acceptor of the active site.

Belongs to the protein kinase superfamily. Ser/Thr protein kinase family. As to quaternary structure, interacts with Pkn1. In terms of processing, autophosphorylated on serine and threonine residues. Present in elementary bodies 40 hours post-infection as 2 bands of approximately 55 to 60 and 45 to 50 kDa, which may be due to differential phosphorylation as well as degradation; an enzymatically active full-length protein can also be detected.

The enzyme catalyses L-seryl-[protein] + ATP = O-phospho-L-seryl-[protein] + ADP + H(+). It carries out the reaction L-threonyl-[protein] + ATP = O-phospho-L-threonyl-[protein] + ADP + H(+). Together with the serine/threonine kinase Pkn1, may play a role in the specific interactions with host proteins during intracellular growth. Autophosphorylates and also phosphorylates Pkn1. This is Serine/threonine-protein kinase PknD from Chlamydia trachomatis serovar L2 (strain ATCC VR-902B / DSM 19102 / 434/Bu).